The primary structure comprises 260 residues: Putative enoyl-CoA hydratase/isomerase YngF (260 aa).

It belongs to the enoyl-CoA hydratase/isomerase family.

The sequence is that of Putative enoyl-CoA hydratase/isomerase YngF (yngF) from Bacillus subtilis (strain 168).